The sequence spans 61 residues: Large ribosomal subunit protein uL30 (61 aa).

It belongs to the universal ribosomal protein uL30 family. As to quaternary structure, part of the 50S ribosomal subunit.

The sequence is that of Large ribosomal subunit protein uL30 from Lactobacillus acidophilus (strain ATCC 700396 / NCK56 / N2 / NCFM).